The chain runs to 225 residues: Holliday junction branch migration complex subunit RuvA (225 aa).

The tract at residues 1–68 is domain I; the sequence is MIGWLQGQKV…DDGSSLFGFP (68 aa). Positions 69 to 147 are domain II; it reads ERRERDMFRT…EFSCRDPGMS (79 aa). Positions 148–158 are flexible linker; that stretch reads LVDNGVIDSHQ. Positions 159 to 225 are domain III; the sequence is LKDSSLHELQ…SLRWLSQEAA (67 aa).

Belongs to the RuvA family. In terms of assembly, homotetramer. Forms an RuvA(8)-RuvB(12)-Holliday junction (HJ) complex. HJ DNA is sandwiched between 2 RuvA tetramers; dsDNA enters through RuvA and exits via RuvB. An RuvB hexamer assembles on each DNA strand where it exits the tetramer. Each RuvB hexamer is contacted by two RuvA subunits (via domain III) on 2 adjacent RuvB subunits; this complex drives branch migration. In the full resolvosome a probable DNA-RuvA(4)-RuvB(12)-RuvC(2) complex forms which resolves the HJ.

Its subcellular location is the cytoplasm. The RuvA-RuvB-RuvC complex processes Holliday junction (HJ) DNA during genetic recombination and DNA repair, while the RuvA-RuvB complex plays an important role in the rescue of blocked DNA replication forks via replication fork reversal (RFR). RuvA specifically binds to HJ cruciform DNA, conferring on it an open structure. The RuvB hexamer acts as an ATP-dependent pump, pulling dsDNA into and through the RuvAB complex. HJ branch migration allows RuvC to scan DNA until it finds its consensus sequence, where it cleaves and resolves the cruciform DNA. In Prochlorococcus marinus (strain MIT 9313), this protein is Holliday junction branch migration complex subunit RuvA.